Consider the following 214-residue polypeptide: Ribosomal RNA small subunit methyltransferase G (214 aa).

Residues Gly-81, Met-86, 132-133 (VE), and Arg-147 each bind S-adenosyl-L-methionine.

This sequence belongs to the methyltransferase superfamily. RNA methyltransferase RsmG family.

The protein resides in the cytoplasm. It catalyses the reaction guanosine(527) in 16S rRNA + S-adenosyl-L-methionine = N(7)-methylguanosine(527) in 16S rRNA + S-adenosyl-L-homocysteine. Functionally, specifically methylates the N7 position of guanine in position 527 of 16S rRNA. The sequence is that of Ribosomal RNA small subunit methyltransferase G from Ectopseudomonas mendocina (strain ymp) (Pseudomonas mendocina).